Here is a 337-residue protein sequence, read N- to C-terminus: 2-oxoglutarate receptor 1 (337 aa).

Over 1 to 38 (MIEPLDSPASDSDFLDYPSALGNCTDEQISFKMQYLPV) the chain is Extracellular. A glycan (N-linked (GlcNAc...) asparagine) is linked at asparagine 23. A helical transmembrane segment spans residues 39 to 59 (IYSIIFLVGFPGNTVAISIYI). At 60-69 (FKMRPWRGST) the chain is on the cytoplasmic side. A helical membrane pass occupies residues 70-90 (VIMLNLALTDLLYLTSLPFLI). At 91–116 (HYYASGENWIFGDFMCKFIRFGFHFN) the chain is on the extracellular side. An intrachain disulfide couples cysteine 106 to cysteine 183. The helical transmembrane segment at 117–137 (LYSSILFLTCFSLFRYVVIIH) threads the bilayer. The Cytoplasmic segment spans residues 138-151 (PMSCFSIQKTRWAV). The helical transmembrane segment at 152 to 172 (VACAGVWVISLVAVMPMTFLI) threads the bilayer. Topologically, residues 173 to 200 (TSTTRTNRSACLDLTSSDDLTTIKWYNL) are extracellular. A helical membrane pass occupies residues 201–221 (ILTATTFCLPLVIVTLCYTTI). At 222-242 (ISTLTHGPRTHSCFKQKARRL) the chain is on the cytoplasmic side. Residues 243-263 (TILLLLVFYICFLPFHILRVI) traverse the membrane as a helical segment. The Extracellular segment spans residues 264–284 (RIESRLLSISCSIESHIHEAY). The helical transmembrane segment at 285 to 305 (IVSRPLAALNTFGNLLLYVVV) threads the bilayer. The Cytoplasmic portion of the chain corresponds to 306-337 (SNNFQQAFCSIVRCKASGDLEQGKKDSCSNNP).

Belongs to the G-protein coupled receptor 1 family. In terms of tissue distribution, predominantly expressed in the kidney with limited expression in the testis and the smooth muscle. Expressed in SLC26A4/pendrin-positive type B and non-A non-B intercalated cells (at protein level).

The protein resides in the cell membrane. In terms of biological role, g protein-coupled receptor for dicarboxylates and amino dicarboxylates. Receptor for itaconate produced by activated macrophages upon bacterial infection. In the respiratory epithelium, couples the binding of itaconate to the activation of GNA11 and downstream intracellular Ca(2+) release, leading to mucocilliary clearance of airborne pathogens. Receptor for leukotriene E4 (LTE4) produced by mast cells upon allergic inflammation. Binds with high affinity to LTE4 and elicits mucin release from pulmonary epithelium in response to airborne fungi allergens. Regulates mucin-producing goblet cell homeostasis. Receptor for alpha-ketoglutarate produced by proximal tubule renal cells upon metabolic alkalosis. In an intrarenal paracrine signaling pathway, binds alpha-ketoglutarate and drives transepithelial salt reabsorption and bicarbonate secretion by SLC26A4/pendrin-positive intercalated cells. The polypeptide is 2-oxoglutarate receptor 1 (Oxgr1) (Mus musculus (Mouse)).